The chain runs to 129 residues: Glycine cleavage system H protein (129 aa).

The 83-residue stretch at 24 to 106 folds into the Lipoyl-binding domain; it reads TYTVGITEHA…YAGGWIFKIK (83 aa). Lysine 65 is modified (N6-lipoyllysine).

This sequence belongs to the GcvH family. The glycine cleavage system is composed of four proteins: P, T, L and H. The cofactor is (R)-lipoate.

In terms of biological role, the glycine cleavage system catalyzes the degradation of glycine. The H protein shuttles the methylamine group of glycine from the P protein to the T protein. The sequence is that of Glycine cleavage system H protein from Citrobacter koseri (strain ATCC BAA-895 / CDC 4225-83 / SGSC4696).